A 245-amino-acid polypeptide reads, in one-letter code: Glutathione S-transferase F4 (245 aa).

The 82-residue stretch at 25–106 (AGYKVHGDPF…YIAYVHSSRG (82 aa)) folds into the GST N-terminal domain. Glutathione contacts are provided by residues 35–36 (ST), 64–65 (HK), 77–78 (QV), and 90–91 (ES). One can recognise a GST C-terminal domain in the interval 114–244 (SHETMATLTM…QEKSWFNKPR (131 aa)).

This sequence belongs to the GST superfamily. Phi family.

It is found in the cytoplasm. The protein resides in the cytosol. It catalyses the reaction RX + glutathione = an S-substituted glutathione + a halide anion + H(+). Its function is as follows. May be involved in the conjugation of reduced glutathione to a wide number of exogenous and endogenous hydrophobic electrophiles and have a detoxification role against certain herbicides. The sequence is that of Glutathione S-transferase F4 (GSTF4) from Arabidopsis thaliana (Mouse-ear cress).